The sequence spans 372 residues: Methenyltetrahydrofolate synthase domain-containing protein (372 aa).

Positions 246–258 are enriched in basic and acidic residues; the sequence is KQAGKDVTLRDEP. Residues 246–289 are disordered; the sequence is KQAGKDVTLRDEPGSQQPAPGPIRRPQDRPQTGSRGGSRSPLQG. The region spanning 296–369 is the RRM domain; sequence ATVCVGNLPF…NALRVSLGQQ (74 aa).

The sequence is that of Methenyltetrahydrofolate synthase domain-containing protein (Mthfsd) from Mus musculus (Mouse).